The following is a 644-amino-acid chain: Chaperone protein DnaK (644 aa).

A Phosphothreonine; by autocatalysis modification is found at Thr-199. Residues 602–644 are disordered; sequence LYAEQSAQQQGSAGATGGEQPKADKAADDGVVDAEFEEVKDDK. Low complexity predominate over residues 604-614; the sequence is AEQSAQQQGSA. Positions 631-644 are enriched in acidic residues; sequence GVVDAEFEEVKDDK.

The protein belongs to the heat shock protein 70 family.

Acts as a chaperone. The sequence is that of Chaperone protein DnaK from Teredinibacter turnerae (strain ATCC 39867 / T7901).